Here is a 62-residue protein sequence, read N- to C-terminus: Sperm protamine P1 (62 aa).

The disordered stretch occupies residues Met1–Arg62.

This sequence belongs to the protamine P1 family. In terms of tissue distribution, testis.

Its subcellular location is the nucleus. It localises to the chromosome. Its function is as follows. Protamines substitute for histones in the chromatin of sperm during the haploid phase of spermatogenesis. They compact sperm DNA into a highly condensed, stable and inactive complex. The protein is Sperm protamine P1 (PRM1) of Pseudantechinus bilarni (Sandstone dibbler).